The chain runs to 162 residues: Regulatory protein RecX (162 aa).

It belongs to the RecX family.

It localises to the cytoplasm. In terms of biological role, modulates RecA activity. The protein is Regulatory protein RecX of Xanthomonas campestris pv. campestris (strain 8004).